The following is a 348-amino-acid chain: Rhodopsin (348 aa).

M1 is subject to N-acetylmethionine. At 1–36 (MNGTEGPNFYVPFSNKTGVVRSPFEYPQYYLAEPWQ) the chain is on the extracellular side. N2 and N15 each carry an N-linked (GlcNAc...) asparagine glycan. A helical membrane pass occupies residues 37-61 (FSMLAAYMFLLIVLGFPINFLTLYV). The Cytoplasmic segment spans residues 62-73 (TVQHKKLRTPLN). The helical transmembrane segment at 74 to 96 (YILLNLAVADLFMVFGGFTTTLY) threads the bilayer. The Extracellular segment spans residues 97–110 (TSLHGYFVFGPTGC). C110 and C187 are joined by a disulfide. A helical membrane pass occupies residues 111–133 (NVEGFFATLGGEIALWSLVVLAI). Residues 134–136 (ERY) carry the 'Ionic lock' involved in activated form stabilization motif. At 134–152 (ERYVVVCKPMSNFRFGENH) the chain is on the cytoplasmic side. The chain crosses the membrane as a helical span at residues 153–173 (AIMGVAFTWVMALACAAPPLA). Residues 174 to 202 (GWSRYIPEGMQCSCGIDYYTLKPEINNES) lie on the Extracellular side of the membrane. E201 is a binding site for Zn(2+). A helical membrane pass occupies residues 203 to 224 (FVIYMFVVHFAIPMIVIFFCYG). Residues 225-252 (QLVFTVKEAAAQQQESATTQKAEKEVTR) are Cytoplasmic-facing. A helical transmembrane segment spans residues 253 to 274 (MVIIMVIAFLICWVPYASVAFY). Topologically, residues 275–286 (IFTHQGSDFGPI) are extracellular. Q279 lines the Zn(2+) pocket. The helical transmembrane segment at 287–308 (FMTLPAFFAKSSSIYNPVIYIM) threads the bilayer. Residue K296 is modified to N6-(retinylidene)lysine. Residues 309-348 (MNKQFRNCMITTLCCGKNPLGDDEASASASKTETSQVAPA) are Cytoplasmic-facing. S-palmitoyl cysteine attachment occurs at residues C322 and C323. An interaction with SAG region spans residues 330–348 (DDEASASASKTETSQVAPA). Phosphoserine occurs at positions 334 and 338. Residues T340 and T342 each carry the phosphothreonine modification. Position 343 is a phosphoserine (S343).

This sequence belongs to the G-protein coupled receptor 1 family. Opsin subfamily. As to quaternary structure, homodimer. May form a complex composed of RHO, GRK1 and RCVRN in a Ca(2+)-dependent manner; RCVRN prevents the interaction between GRK1 and RHO. Interacts with GRK1. Interacts (phosphorylated form) with SAG. Interacts with GNAT1. Interacts with GNAT3. SAG and G-proteins compete for a common binding site. Interacts with PRCD; the interaction promotes PRCD stability. Forms a complex with ASAP1 and ARF4. Forms a complex with ASAP1, RAB11A, Rabin8/RAB3IP, ARF4 and RAB11FIP3; the complex regulates Golgi-to-cilia rhodopsin/RHO transport in photoreceptors. In terms of processing, phosphorylated on some or all of the serine and threonine residues present in the C-terminal region. Contains one covalently linked retinal chromophore. Upon light absorption, the covalently bound 11-cis-retinal is converted to all-trans-retinal. After hydrolysis of the Schiff base and release of the covalently bound all-trans-retinal, active rhodopsin is regenerated by binding of a fresh molecule of 11-cis-retinal.

It is found in the membrane. Its subcellular location is the cell projection. It localises to the cilium. The protein resides in the photoreceptor outer segment. In terms of biological role, photoreceptor required for image-forming vision at low light intensity. Required for photoreceptor cell viability after birth. Light-induced isomerization of 11-cis to all-trans retinal triggers a conformational change that activates signaling via G-proteins. Subsequent receptor phosphorylation mediates displacement of the bound G-protein alpha subunit by the arrestin SAG and terminates signaling. The protein is Rhodopsin (RHO) of Canis lupus familiaris (Dog).